Reading from the N-terminus, the 212-residue chain is MSVLTPYAGRLADGIAALGLDIPTATQARLIAFGELLLKWNKVYNLTAIRAPQEVITHHLLDSLAVLPYLSAVTRLADIGSGGGLPGIPLAIVRPELSVISVETVNKKASFQQQAKIELGLGNFQPLNARVENLKPEQPCDGVISRAFSSLKDFVELSGHLVGDGGALYAMKGVRPDDEVAALPAGWTVRATHPLAVPGLDAERHLLVIARG.

S-adenosyl-L-methionine-binding positions include Gly-80, Leu-85, 131–132, and Arg-146; that span reads VE.

This sequence belongs to the methyltransferase superfamily. RNA methyltransferase RsmG family.

It is found in the cytoplasm. It catalyses the reaction guanosine(527) in 16S rRNA + S-adenosyl-L-methionine = N(7)-methylguanosine(527) in 16S rRNA + S-adenosyl-L-homocysteine. Functionally, specifically methylates the N7 position of guanine in position 527 of 16S rRNA. This chain is Ribosomal RNA small subunit methyltransferase G, found in Azoarcus sp. (strain BH72).